The primary structure comprises 309 residues: Protein FdhE homolog (309 aa).

Belongs to the FdhE family.

The protein localises to the cytoplasm. In terms of biological role, necessary for formate dehydrogenase activity. This chain is Protein FdhE homolog, found in Pasteurella multocida (strain Pm70).